The following is a 331-amino-acid chain: Proton-translocating ferredoxin:NAD(+) oxidoreductase complex subunit D (331 aa).

A run of 3 helical transmembrane segments spans residues 23–43 (ESVSKIMWSVCLALTPAAVFG), 44–64 (VFNFGIHALEVIITGIIAAVV), and 84–106 (AFLTGLLLSMCLPPDIPPYMVAI). Position 163 is an FMN phosphoryl threonine (Thr163). A run of 4 helical transmembrane segments spans residues 196-216 (NGSIGETSTILLVLGGLYLIY), 226-246 (VVMIGTVGILTWAFGGTTGIF), 251-271 (VFHMMAGGLVIGAFFMATDMV), and 273-293 (IPMTIKGQIIFALGAGALTSL).

Belongs to the NqrB/RnfD family. As to quaternary structure, the complex is composed of six subunits: RnfA, RnfB, RnfC, RnfD, RnfE and RnfG. Requires FMN as cofactor.

The protein localises to the cell membrane. Functionally, part of a membrane-bound complex that couples electron transfer with translocation of ions across the membrane. Couples electron transfer from reduced ferredoxin to NAD(+) with translocation of H(+) out of the cell. Essential for energy conservation during autotrophic growth. Contributes to ATP synthesis during heterotrophic growth. The sequence is that of Proton-translocating ferredoxin:NAD(+) oxidoreductase complex subunit D from Clostridium ljungdahlii (strain ATCC 55383 / DSM 13528 / PETC).